Consider the following 396-residue polypeptide: NADH-quinone oxidoreductase subunit D (396 aa).

This sequence belongs to the complex I 49 kDa subunit family. NDH-1 is composed of 14 different subunits. Subunits NuoB, C, D, E, F, and G constitute the peripheral sector of the complex.

It localises to the cell inner membrane. The enzyme catalyses a quinone + NADH + 5 H(+)(in) = a quinol + NAD(+) + 4 H(+)(out). Its function is as follows. NDH-1 shuttles electrons from NADH, via FMN and iron-sulfur (Fe-S) centers, to quinones in the respiratory chain. The immediate electron acceptor for the enzyme in this species is believed to be ubiquinone. Couples the redox reaction to proton translocation (for every two electrons transferred, four hydrogen ions are translocated across the cytoplasmic membrane), and thus conserves the redox energy in a proton gradient. This chain is NADH-quinone oxidoreductase subunit D, found in Bartonella henselae (strain ATCC 49882 / DSM 28221 / CCUG 30454 / Houston 1) (Rochalimaea henselae).